A 493-amino-acid chain; its full sequence is 3-octaprenyl-4-hydroxybenzoate carboxy-lyase (493 aa).

N172 contacts Mn(2+). Prenylated FMN-binding positions include I175–R177, R189–L191, and R194–G195. A Mn(2+)-binding site is contributed by E238. Catalysis depends on D287, which acts as the Proton donor.

It belongs to the UbiD family. As to quaternary structure, homohexamer. Requires prenylated FMN as cofactor. Mn(2+) is required as a cofactor.

It is found in the cell membrane. It catalyses the reaction a 4-hydroxy-3-(all-trans-polyprenyl)benzoate + H(+) = a 2-(all-trans-polyprenyl)phenol + CO2. It participates in cofactor biosynthesis; ubiquinone biosynthesis. Catalyzes the decarboxylation of 3-octaprenyl-4-hydroxy benzoate to 2-octaprenylphenol, an intermediate step in ubiquinone biosynthesis. The protein is 3-octaprenyl-4-hydroxybenzoate carboxy-lyase of Shewanella halifaxensis (strain HAW-EB4).